Reading from the N-terminus, the 64-residue chain is MGMRMMFTLFLLVVLTTTVVSYPSDSASDGRDDEAKDERSDMYELKRNGRCCHPACGKHFNCGR.

The first 21 residues, 1–21, serve as a signal peptide directing secretion; the sequence is MGMRMMFTLFLLVVLTTTVVS. Residues 22-47 constitute a propeptide that is removed on maturation; the sequence is YPSDSASDGRDDEAKDERSDMYELKR. 2 cysteine pairs are disulfide-bonded: Cys-51/Cys-56 and Cys-52/Cys-62. A Cysteine amide modification is found at Cys-62.

It belongs to the conotoxin A superfamily. As to expression, expressed by the venom duct.

It localises to the secreted. Alpha-conotoxins act on postsynaptic membranes, they bind to the nicotinic acetylcholine receptors (nAChR) and thus inhibit them. The sequence is that of Alpha-conotoxin-like Ac1.1a from Conus achatinus (Little frog cone).